The chain runs to 77 residues: U8-lycotoxin-Ls1b (77 aa).

Residues 1–20 (MKLIIFTGLVLFAIVSLIEA) form the signal peptide. Residues 21-26 (QAENEK) constitute a propeptide that is removed on maturation.

It belongs to the neurotoxin 19 (CSTX) family. 08 (U8-Lctx) subfamily. Post-translationally, contains 4 disulfide bonds. As to expression, expressed by the venom gland.

The protein localises to the secreted. This is U8-lycotoxin-Ls1b from Lycosa singoriensis (Wolf spider).